We begin with the raw amino-acid sequence, 183 residues long: NADH-quinone oxidoreductase subunit I (183 aa).

4Fe-4S ferredoxin-type domains follow at residues 44–74 (LNRW…VEAG) and 90–119 (RVYQ…MTNE). Positions 54, 57, 60, 64, 99, 102, 105, and 109 each coordinate [4Fe-4S] cluster. Residues 143–183 (QGMEAPPHPMRLGETEKDYYRLGRDDNAAARADEQNSEAVQ) form a disordered region. Over residues 153-176 (RLGETEKDYYRLGRDDNAAARADE) the composition is skewed to basic and acidic residues.

It belongs to the complex I 23 kDa subunit family. As to quaternary structure, NDH-1 is composed of 14 different subunits. Subunits NuoA, H, J, K, L, M, N constitute the membrane sector of the complex. [4Fe-4S] cluster serves as cofactor.

It is found in the cell membrane. It catalyses the reaction a quinone + NADH + 5 H(+)(in) = a quinol + NAD(+) + 4 H(+)(out). NDH-1 shuttles electrons from NADH, via FMN and iron-sulfur (Fe-S) centers, to quinones in the respiratory chain. The immediate electron acceptor for the enzyme in this species is believed to be ubiquinone. Couples the redox reaction to proton translocation (for every two electrons transferred, four hydrogen ions are translocated across the cytoplasmic membrane), and thus conserves the redox energy in a proton gradient. In Thermobifida fusca (strain YX), this protein is NADH-quinone oxidoreductase subunit I.